Consider the following 806-residue polypeptide: WEB family protein At3g02930, chloroplastic (806 aa).

The transit peptide at 1 to 78 (MASKIKNGLS…PTPPEKTQIR (78 aa)) directs the protein to the chloroplast. Disordered stretches follow at residues 1 to 94 (MASK…QIKE) and 380 to 403 (KSEQ…EKLK). Low complexity predominate over residues 9 to 22 (LSDTTLRKSSSTSL). The segment covering 34 to 59 (PDSNSPSPTQQQSRLSFERPSSNSKP) has biased composition (polar residues). Coiled-coil stretches lie at residues 88-530 (QSVQ…FESA), 585-662 (DCLK…IEEN), and 698-757 (ETLD…EDLN). Basic and acidic residues predominate over residues 391 to 403 (ESSKSEKEAEKLK). Disordered regions lie at residues 684–725 (ENGY…EDET) and 746–777 (KESA…EDEL). 2 stretches are compositionally biased toward basic and acidic residues: residues 685-699 (NGYR…KVET) and 706-725 (KLEE…EDET). Over residues 759 to 769 (VDQSQKTSPVN) the composition is skewed to polar residues.

It belongs to the WEB family.

It localises to the plastid. The protein resides in the chloroplast. This chain is WEB family protein At3g02930, chloroplastic, found in Arabidopsis thaliana (Mouse-ear cress).